The following is a 1358-amino-acid chain: Indole-3-acetaldehyde oxidase (1358 aa).

In terms of domain architecture, 2Fe-2S ferredoxin-type spans 11–98 (STVVLAVNGK…RCSVTTSEGI (88 aa)). Cysteine 50, cysteine 55, and cysteine 58 together coordinate [2Fe-2S] cluster. The FAD-binding PCMH-type domain maps to 241–419 (IAASGDGWYH…LSIFIPEWGS (179 aa)). The segment at 532-559 (SSAPSNIDTPNGSYTHETGSNVDSPERH) is disordered. The span at 537–554 (NIDTPNGSYTHETGSNVD) shows a compositional bias: polar residues.

The protein belongs to the xanthine dehydrogenase family. In terms of assembly, aldehyde oxidases (AO) are homodimers and heterodimers of AO subunits. The cofactor is [2Fe-2S] cluster. FAD serves as cofactor. It depends on Mo-molybdopterin as a cofactor. As to expression, mostly expressed in roots, and, to a lower extent, in mesocotyl, leaves and coleoptile. Accumulates in apical region of maize coleoptiles (at protein level).

The protein resides in the cytoplasm. The enzyme catalyses indole-3-acetaldehyde + O2 + H2O = (indol-3-yl)acetate + H2O2 + H(+). Its activity is regulated as follows. Inhibited by 2-mercaptoethanol, p-chloromercuribenzoate, and iodoacetate. In terms of biological role, in higher plants aldehyde oxidases (AO) appear to be homo- and heterodimeric assemblies of AO subunits with probably different physiological functions. Involved in the biosynthesis of auxin from (indol-3-yl)acetaldehyde. Can also use indole-3-aldehyde and benzaldehyde as substrate. This Zea mays (Maize) protein is Indole-3-acetaldehyde oxidase (AO1).